Reading from the N-terminus, the 131-residue chain is Large ribosomal subunit protein bL19 (131 aa).

A disordered region spans residues 107–131 (GKSARIAERAERGSDKGKAAPAAAE). A compositionally biased stretch (basic and acidic residues) spans 111–124 (RIAERAERGSDKGK).

Belongs to the bacterial ribosomal protein bL19 family.

This protein is located at the 30S-50S ribosomal subunit interface and may play a role in the structure and function of the aminoacyl-tRNA binding site. This is Large ribosomal subunit protein bL19 from Methylobacterium sp. (strain 4-46).